A 570-amino-acid chain; its full sequence is Urease subunit alpha (570 aa).

Ni(2+) is bound by residues H137, H139, and K220. Position 220 is an N6-carboxylysine (K220). H222 lines the substrate pocket. Positions 249 and 275 each coordinate Ni(2+). Catalysis depends on H323, which acts as the Proton donor. D363 lines the Ni(2+) pocket.

It belongs to the metallo-dependent hydrolases superfamily. Urease alpha subunit family. In terms of assembly, heterotrimer of UreA (gamma), UreB (beta) and UreC (alpha) subunits. Three heterotrimers associate to form the active enzyme. It depends on Ni cation as a cofactor. Carboxylation allows a single lysine to coordinate two nickel ions.

It localises to the cytoplasm. The catalysed reaction is urea + 2 H2O + H(+) = hydrogencarbonate + 2 NH4(+). Its pathway is nitrogen metabolism; urea degradation; CO(2) and NH(3) from urea (urease route): step 1/1. The polypeptide is Urease subunit alpha (Lachnoclostridium phytofermentans (strain ATCC 700394 / DSM 18823 / ISDg) (Clostridium phytofermentans)).